The sequence spans 159 residues: Fatty acid-binding protein homolog 1 (159 aa).

An N-terminal signal peptide occupies residues 1–17; that stretch reads MCAKIALLLVLVGAASA.

This sequence belongs to the calycin superfamily. Fatty-acid binding protein (FABP) family. In terms of tissue distribution, first detected in hypodermal precursor cells at the time of gastrulation. From the two-fold stage through to three-fold stages, expression is localized exclusively to hyp-7 but disappears in newly hatched L1s and subsequent developmental stages. Expression from L1 to adult stages is found in a single neuron in the ventral cord with a process into the nerve ring.

Its subcellular location is the secreted. May play a role in sequestering potentially toxic fatty acids and their peroxidation products, or it may be involved in the maintenance of the impermeable lipid layer of the eggshell. The polypeptide is Fatty acid-binding protein homolog 1 (lbp-1) (Caenorhabditis elegans).